A 1248-amino-acid chain; its full sequence is Ankyrin repeat and sterile alpha motif domain-containing protein 1B (1248 aa).

ANK repeat units lie at residues 2–31 (GKDQ…GGIL), 58–87 (SGYT…STNV), 91–120 (KGYF…SHSR), 127–156 (ENET…DPTI), 160–189 (KLET…NLMS), 193–222 (RKHT…DVSC), and 225–254 (EKGS…DANI). Positions 296 to 322 (EPVQEDATQETHISSPVESPSQKTKSE) are disordered. The segment covering 305–322 (ETHISSPVESPSQKTKSE) has biased composition (polar residues). Residues serine 309, serine 310, serine 314, serine 353, and serine 364 each carry the phosphoserine modification. 3 disordered regions span residues 367 to 400 (ELGK…NTCG), 474 to 514 (APSP…PDTA), and 558 to 623 (SFTA…ENPF). Residues 371 to 384 (NGSQSVRTSSTINL) show a composition bias toward polar residues. A compositionally biased stretch (acidic residues) spans 388–397 (EVEEEDDDEN). Position 503 is a phosphothreonine (threonine 503). Phosphoserine is present on residues serine 507 and serine 510. Over residues 558–575 (SFTASPPASPPTSSVGTT) the composition is skewed to low complexity. Positions 577-601 (VKNEGTNHTDDLSRQDDNDPPKEYD) are enriched in basic and acidic residues. Phosphoserine is present on serine 738. The interval 749-777 (EKTSRVNWSESSTAEHSSKGNSERTPSFT) is disordered. Residues 753–763 (RVNWSESSTAE) show a composition bias toward polar residues. Threonine 773 carries the post-translational modification Phosphothreonine. Serine 775 is modified (phosphoserine). 2 SAM domains span residues 810-876 (CPVQ…LPKM) and 884-949 (YHPT…RLHD). The residue at position 901 (tyrosine 901) is a Phosphotyrosine. The Nuclear localization signal signature appears at 935 to 938 (HRKR). Residues 944 to 989 (GDRLHDDPPQKPPRSITLREPSGNHTPPQLSPSLSQSTYTTGGSLD) are disordered. Low complexity predominate over residues 969–984 (TPPQLSPSLSQSTYTT). Serine 974 is subject to Phosphoserine. Position 1007 is a phosphotyrosine (tyrosine 1007). In terms of domain architecture, PID spans 1056–1213 (IFQSCDYKAF…SFENKPSKPI (158 aa)). Residues 1197–1248 (HSSTLPESFENKPSKPIPKPRVSIRKSVDLLHASHTGQEPSERHTEEALRKF) are disordered. Residues 1236–1248 (PSERHTEEALRKF) are compositionally biased toward basic and acidic residues.

Isoform 3 interacts with DLG4. Interacts with EPHA8. Isoform 2 interacts with COIL. Isoform 4 interacts with APP and EPHA8. Isoform 6 interacts with EPHA8. In terms of processing, isoform 3 nuclear translocation requires an NMDAR-dependent proteolytic cleavage. In terms of tissue distribution, highly expressed in marrow from patients with pre-B ALL associated with the t(1;19) translocation. Strongly expressed in brain and testis. Expressed in fetal brain. Isoform 4 is highly expressed in brain (at protein level). Isoform 6 is expressed in brain and several cancer cell lines.

The protein resides in the cytoplasm. Its subcellular location is the nucleus. It is found in the postsynaptic density. It localises to the cell projection. The protein localises to the dendritic spine. The protein resides in the cajal body. Isoform 2 may participate in the regulation of nucleoplasmic coilin protein interactions in neuronal and transformed cells. Its function is as follows. Isoform 3 can regulate global protein synthesis by altering nucleolar numbers. Functionally, isoform 4 may play a role as a modulator of APP processing. Overexpression can down-regulate APP processing. The polypeptide is Ankyrin repeat and sterile alpha motif domain-containing protein 1B (ANKS1B) (Homo sapiens (Human)).